The sequence spans 204 residues: Holliday junction branch migration complex subunit RuvA (204 aa).

Residues 1–64 form a domain I region; sequence MIARLRGTLL…EDGQTLFGFR (64 aa). The tract at residues 65–143 is domain II; the sequence is TRAERDLFRR…GVGGGSTAAP (79 aa). Residues 144–153 form a flexible linker region; sequence AAGADHPTGE. The tract at residues 153-204 is domain III; sequence ENDPVSEAIEGLVALGYKPPEAARMARNAAEPELGCEAIIRRALQRAVPRGG.

Belongs to the RuvA family. In terms of assembly, homotetramer. Forms an RuvA(8)-RuvB(12)-Holliday junction (HJ) complex. HJ DNA is sandwiched between 2 RuvA tetramers; dsDNA enters through RuvA and exits via RuvB. An RuvB hexamer assembles on each DNA strand where it exits the tetramer. Each RuvB hexamer is contacted by two RuvA subunits (via domain III) on 2 adjacent RuvB subunits; this complex drives branch migration. In the full resolvosome a probable DNA-RuvA(4)-RuvB(12)-RuvC(2) complex forms which resolves the HJ.

It localises to the cytoplasm. In terms of biological role, the RuvA-RuvB-RuvC complex processes Holliday junction (HJ) DNA during genetic recombination and DNA repair, while the RuvA-RuvB complex plays an important role in the rescue of blocked DNA replication forks via replication fork reversal (RFR). RuvA specifically binds to HJ cruciform DNA, conferring on it an open structure. The RuvB hexamer acts as an ATP-dependent pump, pulling dsDNA into and through the RuvAB complex. HJ branch migration allows RuvC to scan DNA until it finds its consensus sequence, where it cleaves and resolves the cruciform DNA. The chain is Holliday junction branch migration complex subunit RuvA from Halorhodospira halophila (strain DSM 244 / SL1) (Ectothiorhodospira halophila (strain DSM 244 / SL1)).